Reading from the N-terminus, the 631-residue chain is Phosphomethylpyrimidine synthase (631 aa).

Residues Asn239, Met268, Tyr297, His333, 353-355 (SRG), 394-397 (DGLR), and Glu433 contribute to the substrate site. Residue His437 participates in Zn(2+) binding. Residue Tyr460 coordinates substrate. Residue His501 participates in Zn(2+) binding. Residues Cys581, Cys584, and Cys589 each coordinate [4Fe-4S] cluster.

The protein belongs to the ThiC family. In terms of assembly, homodimer. The cofactor is [4Fe-4S] cluster.

The catalysed reaction is 5-amino-1-(5-phospho-beta-D-ribosyl)imidazole + S-adenosyl-L-methionine = 4-amino-2-methyl-5-(phosphooxymethyl)pyrimidine + CO + 5'-deoxyadenosine + formate + L-methionine + 3 H(+). Its pathway is cofactor biosynthesis; thiamine diphosphate biosynthesis. Catalyzes the synthesis of the hydroxymethylpyrimidine phosphate (HMP-P) moiety of thiamine from aminoimidazole ribotide (AIR) in a radical S-adenosyl-L-methionine (SAM)-dependent reaction. The sequence is that of Phosphomethylpyrimidine synthase from Citrobacter koseri (strain ATCC BAA-895 / CDC 4225-83 / SGSC4696).